The sequence spans 482 residues: tRNA sulfurtransferase (482 aa).

The THUMP domain occupies 61–165 (AEVLEILTHT…GDKLNQVLAR (105 aa)). ATP-binding positions include 183–184 (LI), Lys-265, Gly-287, and Gln-296. The cysteines at positions 344 and 456 are disulfide-linked. The 79-residue stretch at 404–482 (VEEHAVVLDI…GFNNVKVYRP (79 aa)) folds into the Rhodanese domain. Residue Cys-456 is the Cysteine persulfide intermediate of the active site.

It belongs to the ThiI family.

It localises to the cytoplasm. The catalysed reaction is [ThiI sulfur-carrier protein]-S-sulfanyl-L-cysteine + a uridine in tRNA + 2 reduced [2Fe-2S]-[ferredoxin] + ATP + H(+) = [ThiI sulfur-carrier protein]-L-cysteine + a 4-thiouridine in tRNA + 2 oxidized [2Fe-2S]-[ferredoxin] + AMP + diphosphate. It catalyses the reaction [ThiS sulfur-carrier protein]-C-terminal Gly-Gly-AMP + S-sulfanyl-L-cysteinyl-[cysteine desulfurase] + AH2 = [ThiS sulfur-carrier protein]-C-terminal-Gly-aminoethanethioate + L-cysteinyl-[cysteine desulfurase] + A + AMP + 2 H(+). Its pathway is cofactor biosynthesis; thiamine diphosphate biosynthesis. Functionally, catalyzes the ATP-dependent transfer of a sulfur to tRNA to produce 4-thiouridine in position 8 of tRNAs, which functions as a near-UV photosensor. Also catalyzes the transfer of sulfur to the sulfur carrier protein ThiS, forming ThiS-thiocarboxylate. This is a step in the synthesis of thiazole, in the thiamine biosynthesis pathway. The sulfur is donated as persulfide by IscS. The chain is tRNA sulfurtransferase from Vibrio parahaemolyticus serotype O3:K6 (strain RIMD 2210633).